The sequence spans 490 residues: Adenylyltransferase and sulfurtransferase uba4 (490 aa).

Positions 33 to 54 are disordered; sequence EAAKTPPYSDSTETDRGSSSST. ATP-binding positions include Gly-96, Asp-117, 124 to 128, Lys-141, and 185 to 186; these read SNLHR and DH. Zn(2+) contacts are provided by Cys-234 and Cys-237. Cys-251 functions as the Glycyl thioester intermediate; for adenylyltransferase activity in the catalytic mechanism. The Zn(2+) site is built by Cys-323 and Cys-326. One can recognise a Rhodanese domain in the interval 379-488; the sequence is EHGKPVLLDV…WKREVDSTLP (110 aa). Cys-443 acts as the Cysteine persulfide intermediate; for sulfurtransferase activity in catalysis.

In the N-terminal section; belongs to the HesA/MoeB/ThiF family. UBA4 subfamily. Requires Zn(2+) as cofactor.

The protein resides in the cytoplasm. It is found in the cytosol. The enzyme catalyses [molybdopterin-synthase sulfur-carrier protein]-C-terminal Gly-Gly + ATP + H(+) = [molybdopterin-synthase sulfur-carrier protein]-C-terminal Gly-Gly-AMP + diphosphate. The catalysed reaction is [molybdopterin-synthase sulfur-carrier protein]-C-terminal Gly-Gly-AMP + S-sulfanyl-L-cysteinyl-[cysteine desulfurase] + AH2 = [molybdopterin-synthase sulfur-carrier protein]-C-terminal-Gly-aminoethanethioate + L-cysteinyl-[cysteine desulfurase] + A + AMP + 2 H(+). The protein operates within tRNA modification; 5-methoxycarbonylmethyl-2-thiouridine-tRNA biosynthesis. Its function is as follows. Plays a central role in 2-thiolation of mcm(5)S(2)U at tRNA wobble positions of cytosolic tRNA(Lys), tRNA(Glu) and tRNA(Gln). Also essential during biosynthesis of the molybdenum cofactor. Acts by mediating the C-terminal thiocarboxylation of sulfur carriers URM1 and MOCS2A. Its N-terminus first activates urm1 and MOCS2A as acyl-adenylates (-COAMP), then the persulfide sulfur on the catalytic cysteine is transferred to URM1 and MOCS2A to form thiocarboxylation (-COSH) of their C-terminus. The reaction probably involves hydrogen sulfide that is generated from the persulfide intermediate and that acts as a nucleophile towards URM1 and MOCS2A. Subsequently, a transient disulfide bond is formed. Does not use thiosulfate as sulfur donor; NFS1 probably acting as a sulfur donor for thiocarboxylation reactions. This Pyricularia oryzae (strain 70-15 / ATCC MYA-4617 / FGSC 8958) (Rice blast fungus) protein is Adenylyltransferase and sulfurtransferase uba4.